An 85-amino-acid polypeptide reads, in one-letter code: Small ribosomal subunit protein bS20 (85 aa).

Residues 1-25 (MANIKSAIKRAKLSEERRAHNASIK) form a disordered region.

This sequence belongs to the bacterial ribosomal protein bS20 family.

Functionally, binds directly to 16S ribosomal RNA. In Bacillus anthracis (strain A0248), this protein is Small ribosomal subunit protein bS20.